The sequence spans 343 residues: Glyceraldehyde-3-phosphate dehydrogenase (343 aa).

NAD(+) is bound by residues Thr-11 to Ile-12 and Gly-110. Residue Ser-139–Asn-141 participates in D-glyceraldehyde 3-phosphate binding. Cys-140 (nucleophile) is an active-site residue. Arg-168 contributes to the NAD(+) binding site. A D-glyceraldehyde 3-phosphate-binding site is contributed by His-194 to Gly-195. Gln-301 is a binding site for NAD(+).

This sequence belongs to the glyceraldehyde-3-phosphate dehydrogenase family. Homotetramer.

Its subcellular location is the cytoplasm. The enzyme catalyses D-glyceraldehyde 3-phosphate + phosphate + NADP(+) = (2R)-3-phospho-glyceroyl phosphate + NADPH + H(+). The catalysed reaction is D-glyceraldehyde 3-phosphate + phosphate + NAD(+) = (2R)-3-phospho-glyceroyl phosphate + NADH + H(+). Its pathway is carbohydrate degradation; glycolysis; pyruvate from D-glyceraldehyde 3-phosphate: step 1/5. The protein is Glyceraldehyde-3-phosphate dehydrogenase of Methanoregula boonei (strain DSM 21154 / JCM 14090 / 6A8).